The primary structure comprises 392 residues: L-rhamnonate dehydratase (392 aa).

Substrate contacts are provided by His22 and Arg48. Residues Asp214, Glu240, and Glu268 each contribute to the Mg(2+) site. His318 acts as the Proton acceptor in catalysis. Glu338 provides a ligand contact to substrate.

Belongs to the mandelate racemase/muconate lactonizing enzyme family. RhamD subfamily. In terms of assembly, homooctamer; tetramer of dimers. Mg(2+) is required as a cofactor.

The catalysed reaction is L-rhamnonate = 2-dehydro-3-deoxy-L-rhamnonate + H2O. Its function is as follows. Catalyzes the dehydration of L-rhamnonate to 2-keto-3-deoxy-L-rhamnonate (KDR). The chain is L-rhamnonate dehydratase from Paraburkholderia phytofirmans (strain DSM 17436 / LMG 22146 / PsJN) (Burkholderia phytofirmans).